A 476-amino-acid polypeptide reads, in one-letter code: Bifunctional protein HldE (476 aa).

The segment at 1–318 (MFQYSAEFKQ…ENAIHGRSNT (318 aa)) is ribokinase. 195–198 (NMSE) contributes to the ATP binding site. Asp-264 is an active-site residue. The interval 344–476 (MTNGCFDILH…VISKIQQLKD (133 aa)) is cytidylyltransferase.

This sequence in the N-terminal section; belongs to the carbohydrate kinase PfkB family. It in the C-terminal section; belongs to the cytidylyltransferase family. Homodimer.

The catalysed reaction is D-glycero-beta-D-manno-heptose 7-phosphate + ATP = D-glycero-beta-D-manno-heptose 1,7-bisphosphate + ADP + H(+). It carries out the reaction D-glycero-beta-D-manno-heptose 1-phosphate + ATP + H(+) = ADP-D-glycero-beta-D-manno-heptose + diphosphate. The protein operates within nucleotide-sugar biosynthesis; ADP-L-glycero-beta-D-manno-heptose biosynthesis; ADP-L-glycero-beta-D-manno-heptose from D-glycero-beta-D-manno-heptose 7-phosphate: step 1/4. It functions in the pathway nucleotide-sugar biosynthesis; ADP-L-glycero-beta-D-manno-heptose biosynthesis; ADP-L-glycero-beta-D-manno-heptose from D-glycero-beta-D-manno-heptose 7-phosphate: step 3/4. It participates in bacterial outer membrane biogenesis; LPS core biosynthesis. Catalyzes the phosphorylation of D-glycero-D-manno-heptose 7-phosphate at the C-1 position to selectively form D-glycero-beta-D-manno-heptose-1,7-bisphosphate. Functionally, catalyzes the ADP transfer from ATP to D-glycero-beta-D-manno-heptose 1-phosphate, yielding ADP-D-glycero-beta-D-manno-heptose. This chain is Bifunctional protein HldE, found in Pasteurella multocida (strain Pm70).